A 344-amino-acid polypeptide reads, in one-letter code: Coproporphyrin III ferrochelatase (344 aa).

Residue Ser52 coordinates Fe-coproporphyrin III. Residue Cys113 participates in [2Fe-2S] cluster binding. Tyr116 is a Fe-coproporphyrin III binding site. The Fe(2+) site is built by His172 and Glu255. Residues Cys316, Cys325, and Cys330 each coordinate [2Fe-2S] cluster.

Belongs to the ferrochelatase family. [2Fe-2S] cluster is required as a cofactor.

The protein resides in the cytoplasm. It carries out the reaction Fe-coproporphyrin III + 2 H(+) = coproporphyrin III + Fe(2+). It participates in porphyrin-containing compound metabolism; protoheme biosynthesis. Involved in coproporphyrin-dependent heme b biosynthesis. Catalyzes the insertion of ferrous iron into coproporphyrin III to form Fe-coproporphyrin III. In Mycobacterium bovis (strain ATCC BAA-935 / AF2122/97), this protein is Coproporphyrin III ferrochelatase.